Consider the following 328-residue polypeptide: L-lactate dehydrogenase (328 aa).

NAD(+) contacts are provided by residues Val-18, Glu-39, Lys-46, Tyr-71, and 85-86 (GA). The substrate site is built by Gln-88 and Arg-94. Residues Ser-107, 124-126 (AAN), and Ser-149 each bind NAD(+). Position 126–129 (126–129 (NPVD)) interacts with substrate. 154 to 157 (DSAR) provides a ligand contact to substrate. Beta-D-fructose 1,6-bisphosphate contacts are provided by Arg-159 and His-174. The active-site Proton acceptor is His-181. Residue Tyr-226 is modified to Phosphotyrosine. Thr-235 provides a ligand contact to substrate.

The protein belongs to the LDH/MDH superfamily. LDH family. As to quaternary structure, homotetramer.

It localises to the cytoplasm. The enzyme catalyses (S)-lactate + NAD(+) = pyruvate + NADH + H(+). The protein operates within fermentation; pyruvate fermentation to lactate; (S)-lactate from pyruvate: step 1/1. Its activity is regulated as follows. Allosterically activated by fructose 1,6-bisphosphate (FBP). Catalyzes the conversion of lactate to pyruvate. The polypeptide is L-lactate dehydrogenase (Streptococcus thermophilus (strain ATCC BAA-250 / LMG 18311)).